Consider the following 895-residue polypeptide: Androgen receptor (895 aa).

The interval 1–533 (MEVQLGLGRV…PIDYYFPPQK (533 aa)) is modulating. The tract at residues 1 to 562 (MEVQLGLGRV…GSCKVFFKRA (562 aa)) is interaction with ZNF318. Disordered regions lie at residues 33–150 (VIQN…LSLL) and 175–211 (QLLQ…YLGG). Composition is skewed to low complexity over residues 44-81 (AASA…GSPQ) and 175-200 (QLLQ…ASGA). Ser-65 carries the phosphoserine; by CDK9 modification. Residue Ser-79 is modified to Phosphoserine. Residues 201–211 (PTSSKDNYLGG) show a composition bias toward polar residues. Tyr-208 bears the Phosphotyrosine; by CSK mark. Ser-241 carries the phosphoserine modification. Phosphotyrosine; by CSK and TNK2 is present on Tyr-252. A phosphotyrosine; by CSK mark is found at Tyr-292, Tyr-331, Tyr-342, and Tyr-347. The residue at position 348 (Tyr-348) is a Phosphotyrosine; by CSK and TNK2. A Glycyl lysine isopeptide (Lys-Gly) (interchain with G-Cter in SUMO) cross-link involves residue Lys-371. Tyr-378 carries the phosphotyrosine; by CSK modification. A Glycyl lysine isopeptide (Lys-Gly) (interchain with G-Cter in SUMO) cross-link involves residue Lys-496. 2 positions are modified to phosphotyrosine; by CSK: Tyr-510 and Tyr-527. The interval 527-894 (YYFPPQKTCL…GKVKPIYFHT (368 aa)) is interaction with LPXN. The nuclear receptor DNA-binding region spans 534 to 607 (TCLICGDEAS…AGMTLGARKL (74 aa)). 2 NR C4-type zinc fingers span residues 535-555 (CLIC…CGSC) and 571-595 (CASR…LRKC). The segment at 547–637 (YGALTCGSCK…TEETAQKLTV (91 aa)) is interaction with HIPK3. The interval 567-894 (QKYLCASRND…GKVKPIYFHT (328 aa)) is interaction with CCAR1. The tract at residues 600–894 (MTLGARKLKK…GKVKPIYFHT (295 aa)) is interaction with KAT7. Ser-626 bears the Phosphoserine; by STK4/MST1 mark. Residues 644–875 (ECQPIFLNVL…DFPEMMAEII (232 aa)) enclose the NR LBD domain. Positions 681 and 728 each coordinate 17beta-hydroxy-5alpha-androstan-3-one. Glycyl lysine isopeptide (Lys-Gly) (interchain with G-Cter in ubiquitin) cross-links involve residues Lys-821 and Lys-823. Thr-853 contributes to the 17beta-hydroxy-5alpha-androstan-3-one binding site. At Tyr-891 the chain carries Phosphotyrosine; by CSK.

This sequence belongs to the nuclear hormone receptor family. NR3 subfamily. In terms of assembly, binds DNA as a homodimer. Part of a ternary complex containing AR, EFCAB6/DJBP and PARK7. Interacts with HIPK3 and NR0B2 in the presence of androgen. The ligand binding domain interacts with KAT7/HBO1 in the presence of dihydrotestosterone. Interacts with EFCAB6/DJBP, PQBP1, RANBP9, RBAK, SPDEF, SRA1, TGFB1I1 and RREB1. Interacts with ZMIZ1/ZIMP10 and ZMIZ2/ZMIP7 which both enhance its transactivation activity. Interacts with SLC30A9 and RAD54L2/ARIP4. Interacts with MACROD1 (via macro domain). Interacts via the ligand-binding domain with LXXLL and FXXLF motifs from NCOA1, NCOA2, NCOA3 and MAGEA11. Interacts (via nuclear receptor DNA binding domain and nuclear receptor ligand binding domain) with NCOA4. The AR N-terminal poly-Gln region binds Ran resulting in enhancement of AR-mediated transactivation. Ran-binding decreases as the poly-Gln length increases. Interacts with HIP1 (via coiled coil domain). Interacts (via ligand-binding domain) with TRIM68. Interacts with TNK2. Interacts with USP26. Interacts with RNF6. Interacts (regulated by RNF6 probably through polyubiquitination) with RNF14; regulates AR transcriptional activity. Interacts with PRMT2 and TRIM24. Interacts with RACK1. Interacts with RANBP10; this interaction enhances dihydrotestosterone-induced AR transcriptional activity. Interacts with PRPF6 in a hormone-independent way; this interaction enhances dihydrotestosterone-induced AR transcriptional activity. Interacts with STK4/MST1. Interacts with ZIPK/DAPK3. Interacts with LPXN. Interacts with MAK. Part of a complex containing AR, MAK and NCOA3. Interacts with CRY1. Interacts with CCAR1 and GATA2. Interacts with ZNF318. Interacts with BUD31. Interacts with ARID4A. Interacts with ARID4B. Interacts (via NR LBD domain) with ZBTB7A; the interaction is direct and androgen-dependent. Interacts with NCOR1. Interacts with NCOR2. Interacts with CRY2 in a ligand-dependent manner. Post-translationally, phosphorylated in prostate cancer cells in response to several growth factors including EGF. Phosphorylation is induced by c-Src kinase (CSK). Tyr-510 is one of the major phosphorylation sites and an increase in phosphorylation and Src kinase activity is associated with prostate cancer progression. Phosphorylation by TNK2 enhances the DNA-binding and transcriptional activity. Phosphorylation at Ser-65 by CDK9 regulates AR promoter selectivity and cell growth. In terms of processing, sumoylated on Lys-371 (major) and Lys-496. Ubiquitinated. Deubiquitinated by USP26. 'Lys-6' and 'Lys-27'-linked polyubiquitination by RNF6 modulates AR transcriptional activity and specificity. Palmitoylated by ZDHHC7 and ZDHHC21. Palmitoylation is required for plasma membrane targeting and for rapid intracellular signaling via ERK and AKT kinases and cAMP generation.

Its subcellular location is the nucleus. The protein localises to the cytoplasm. Its function is as follows. Steroid hormone receptors are ligand-activated transcription factors that regulate eukaryotic gene expression and affect cellular proliferation and differentiation in target tissues. Transcription factor activity is modulated by bound coactivator and corepressor proteins like ZBTB7A that recruits NCOR1 and NCOR2 to the androgen response elements/ARE on target genes, negatively regulating androgen receptor signaling and androgen-induced cell proliferation. Transcription activation is also down-regulated by NR0B2. Activated, but not phosphorylated, by HIPK3 and ZIPK/DAPK3. The polypeptide is Androgen receptor (AR) (Macaca fascicularis (Crab-eating macaque)).